Consider the following 396-residue polypeptide: Serine/threonine-protein kinase VRK1 (396 aa).

The Protein kinase domain occupies 37–317 (WKLGSPIGQG…LLDYVEKPLY (281 aa)). ATP-binding positions include 43–51 (IGQGGFGCI) and lysine 71. Lysine 71 participates in a covalent cross-link: Glycyl lysine isopeptide (Lys-Gly) (interchain with G-Cter in SUMO2). Aspartate 177 serves as the catalytic Proton acceptor. The segment at 352–396 (KPVAKKRKKEAEESVESSVEDMECSDKQTEEATQTRSKTRKRVQK) is disordered. A compositionally biased stretch (acidic residues) spans 364–374 (ESVESSVEDME). The residue at position 376 (serine 376) is a Phosphoserine. Residues 387-393 (RSKTRKR) form a required for interaction with the nucleosome region.

This sequence belongs to the protein kinase superfamily. CK1 Ser/Thr protein kinase family. VRK subfamily. As to quaternary structure, interacts with HDAC1, KAT2B, SETDB1, KDM3A and KDM4A. Associates with the nucleosome through interactions with nucleosome DNA, histone H2A and histone H2B; the interaction with H2A and H2B is mediated by the nucleosome acidic patch, a cluster of negatively charged residues of H2A and H2B forming a cleft within the nucleosome core. Post-translationally, autophosphorylated at various serine and threonine residues. Autophosphorylation does not impair its ability to phosphorylate p53/TP53. Phosphorylation by PLK3 leads to induction of Golgi fragmentation during mitosis.

It localises to the nucleus. It is found in the cytoplasm. Its subcellular location is the cajal body. It carries out the reaction L-seryl-[protein] + ATP = O-phospho-L-seryl-[protein] + ADP + H(+). The enzyme catalyses L-threonyl-[protein] + ATP = O-phospho-L-threonyl-[protein] + ADP + H(+). Active in presence of Mn(2+), Mg(2+) and Zn(2+), but is not functional with Ca(2+) or Cu(2+). Has a higher affinity for Mn(2+) than for Mg(2+). RAN inhibits its autophosphorylation and its ability to phosphorylate histone H3. Serine/threonine kinase involved in the regulation of key cellular processes including the cell cycle, nuclear condensation, transcription regulation, and DNA damage response. Controls chromatin organization and remodeling by mediating phosphorylation of histone H3 on 'Thr-4' and histone H2AX (H2aXT4ph). It also phosphorylates KAT5 in response to DNA damage, promoting KAT5 association with chromatin and histone acetyltransferase activity. Is involved in the regulation of cell cycle progression of neural progenitors, and is required for proper cortical neuronal migration. Is involved in neurite elongation and branching in motor neurons, and has an essential role in Cajal bodies assembly, acting through COIL phosphorylation and the control of coilin degradation. Involved in Golgi disassembly during the cell cycle: following phosphorylation by PLK3 during mitosis, it is required to induce Golgi fragmentation. Phosphorylates BANF1: disrupts its ability to bind DNA, reduces its binding to LEM domain-containing proteins and causes its relocalization from the nucleus to the cytoplasm. Phosphorylates TP53BP1 and p53/TP53 on 'Thr-18', preventing the interaction between p53/TP53 and MDM2. Phosphorylates ATF2 which activates its transcriptional activity. Phosphorylates JUN. The chain is Serine/threonine-protein kinase VRK1 (VRK1) from Bos taurus (Bovine).